A 157-amino-acid chain; its full sequence is ATP synthase subunit delta (157 aa).

The protein belongs to the ATPase delta chain family. F-type ATPases have 2 components, F(1) - the catalytic core - and F(0) - the membrane proton channel. F(1) has five subunits: alpha(3), beta(3), gamma(1), delta(1), epsilon(1). F(0) has three main subunits: a(1), b(2) and c(10-14). The alpha and beta chains form an alternating ring which encloses part of the gamma chain. F(1) is attached to F(0) by a central stalk formed by the gamma and epsilon chains, while a peripheral stalk is formed by the delta and b chains.

Its subcellular location is the cell membrane. In terms of biological role, f(1)F(0) ATP synthase produces ATP from ADP in the presence of a proton or sodium gradient. F-type ATPases consist of two structural domains, F(1) containing the extramembraneous catalytic core and F(0) containing the membrane proton channel, linked together by a central stalk and a peripheral stalk. During catalysis, ATP synthesis in the catalytic domain of F(1) is coupled via a rotary mechanism of the central stalk subunits to proton translocation. Functionally, this protein is part of the stalk that links CF(0) to CF(1). It either transmits conformational changes from CF(0) to CF(1) or is implicated in proton conduction. This is ATP synthase subunit delta from Chloroflexus aggregans (strain MD-66 / DSM 9485).